The chain runs to 43 residues: Kappa-actitoxin-Avd4p (43 aa).

3 disulfides stabilise this stretch: Cys4/Cys39, Cys6/Cys32, and Cys22/Cys40.

The protein resides in the secreted. It is found in the nematocyst. Its function is as follows. Blocks Kv3 voltage-gated potassium channels. Reduces blood pressure. The chain is Kappa-actitoxin-Avd4p from Anemonia viridis (Snakelocks anemone).